The sequence spans 359 residues: Phosphoserine aminotransferase (359 aa).

Position 41 (R41) interacts with L-glutamate. Residues 75 to 76 (AS), W101, T151, D171, and Q194 each bind pyridoxal 5'-phosphate. An N6-(pyridoxal phosphate)lysine modification is found at K195. 236–237 (NT) contacts pyridoxal 5'-phosphate.

This sequence belongs to the class-V pyridoxal-phosphate-dependent aminotransferase family. SerC subfamily. In terms of assembly, homodimer. The cofactor is pyridoxal 5'-phosphate.

Its subcellular location is the cytoplasm. The catalysed reaction is O-phospho-L-serine + 2-oxoglutarate = 3-phosphooxypyruvate + L-glutamate. It carries out the reaction 4-(phosphooxy)-L-threonine + 2-oxoglutarate = (R)-3-hydroxy-2-oxo-4-phosphooxybutanoate + L-glutamate. It functions in the pathway amino-acid biosynthesis; L-serine biosynthesis; L-serine from 3-phospho-D-glycerate: step 2/3. Its pathway is cofactor biosynthesis; pyridoxine 5'-phosphate biosynthesis; pyridoxine 5'-phosphate from D-erythrose 4-phosphate: step 3/5. Its function is as follows. Catalyzes the reversible conversion of 3-phosphohydroxypyruvate to phosphoserine and of 3-hydroxy-2-oxo-4-phosphonooxybutanoate to phosphohydroxythreonine. The polypeptide is Phosphoserine aminotransferase (Thiobacillus denitrificans (strain ATCC 25259 / T1)).